Here is a 238-residue protein sequence, read N- to C-terminus: 1-(5-phosphoribosyl)-5-[(5-phosphoribosylamino)methylideneamino] imidazole-4-carboxamide isomerase (238 aa).

Residue Asp-8 is the Proton acceptor of the active site. Residue Asp-129 is the Proton donor of the active site.

It belongs to the HisA/HisF family.

It localises to the cytoplasm. The catalysed reaction is 1-(5-phospho-beta-D-ribosyl)-5-[(5-phospho-beta-D-ribosylamino)methylideneamino]imidazole-4-carboxamide = 5-[(5-phospho-1-deoxy-D-ribulos-1-ylimino)methylamino]-1-(5-phospho-beta-D-ribosyl)imidazole-4-carboxamide. Its pathway is amino-acid biosynthesis; L-histidine biosynthesis; L-histidine from 5-phospho-alpha-D-ribose 1-diphosphate: step 4/9. This Clostridium novyi (strain NT) protein is 1-(5-phosphoribosyl)-5-[(5-phosphoribosylamino)methylideneamino] imidazole-4-carboxamide isomerase.